The sequence spans 251 residues: MRQLEICCYGVECAVTAERAGADRIELCSAPAEGGLTPSAGALDSARRRVSIPVHPIVRPRGGDFCYSPSEFELMKSDISFIREQGFPGLVIGLLDVDGHVDQRRMRQVMQLSQGMDVTFHRAFDLCHNPLLTMAQIADLGVTRILTSGQQQSAESGLPLIRELIRQSNGPMIMAGAGVRLSNLQKFIDAGVMELHSSASQRVSSTMRYRKAGVSMCSETEVDEFSRTCVDADVVAAMKNVLMAASPGRVA.

Belongs to the CutC family.

It localises to the cytoplasm. This chain is PF03932 family protein CutC, found in Erwinia tasmaniensis (strain DSM 17950 / CFBP 7177 / CIP 109463 / NCPPB 4357 / Et1/99).